Here is a 960-residue protein sequence, read N- to C-terminus: Gamma-aminobutyric acid type B receptor subunit 1 (960 aa).

Residues 1 to 19 form the signal peptide; that stretch reads MLLLLLVPLFLRPLGAGGA. Residues 20 to 590 lie on the Extracellular side of the membrane; the sequence is QTPNATSEGC…KTFRFLSQKL (571 aa). N-linked (GlcNAc...) asparagine glycans are attached at residues N23 and N83. 2 Sushi domains span residues 29–95 and 97–158; these read CQII…PSRC and RICS…HCQV. Disulfide bonds link C99–C144, C130–C156, and C219–C245. S246, S269, H286, and Y366 together coordinate 4-aminobutanoate. A disulfide bond links C375 and C409. N-linked (GlcNAc...) asparagine glycosylation is found at N408 and N439. E465 contributes to the 4-aminobutanoate binding site. N-linked (GlcNAc...) asparagine glycans are attached at residues N481, N501, and N513. The helical transmembrane segment at 591–611 threads the bilayer; that stretch reads FISVSVLSSLGIVLAVVCLSF. The Cytoplasmic segment spans residues 612–630; sequence NIYNSHVRYIQNSQPNLNN. A helical transmembrane segment spans residues 631 to 651; sequence LTAVGCSLALAAVFPLGLDGY. The Extracellular portion of the chain corresponds to 652–666; it reads HIGRSQFPFVCQARL. The chain crosses the membrane as a helical span at residues 667 to 687; the sequence is WLLGLGFSLGYGSMFTKIWWV. Residues 688–709 lie on the Cytoplasmic side of the membrane; that stretch reads HTVFTKKEEKKEWRKTLEPWKL. Residues 710 to 730 traverse the membrane as a helical segment; sequence YATVGLLVGMDVLTLAIWQIV. Residues 731 to 767 lie on the Extracellular side of the membrane; the sequence is DPLHRTIETFAKEEPKEDIDVSILPQLEHCSSKKMNT. Residues 768-788 traverse the membrane as a helical segment; sequence WLGIFYGYKGLLLLLGIFLAY. At 789-803 the chain is on the cytoplasmic side; sequence ETKSVSTEKINDHRA. Residues 804 to 824 traverse the membrane as a helical segment; sequence VGMAIYNVAVLCLITAPVTMI. The Extracellular segment spans residues 825–832; it reads LSSQQDAA. A helical transmembrane segment spans residues 833–853; that stretch reads FAFASLAIVFSSYITLVVLFV. Topologically, residues 854–960 are cytoplasmic; the sequence is PKMRRLITRG…DGSRVHLLYK (107 aa). A compositionally biased stretch (polar residues) spans 866–879; the sequence is QSETQDTMKTGSST. Disordered regions lie at residues 866–891 and 908–960; these read QSET…RLLE and VSEL…LLYK. Residues 870 to 924 adopt a coiled-coil conformation; the sequence is QDTMKTGSSTNNNEEEKSRLLEKENRELEKIIAEKEERVSELRHQLQSRQQLRSR. T872 bears the Phosphothreonine mark. Positions 887-915 are interaction with ATF4; the sequence is SRLLEKENRELEKIIAEKEERVSELRHQL. T929 bears the Phosphothreonine mark.

The protein belongs to the G-protein coupled receptor 3 family. GABA-B receptor subfamily. As to quaternary structure, heterodimer of GABBR1 and GABBR2. Homodimers may form, but are inactive. Interacts (via C-terminus) with ATF4 (via leucine zipper domain). Interacts with JAKMIP1. Ubiquitously expressed in tissues including the forebrain, cerebellum, eye, atrium, ventricle, lung, stomach, small intestine, colon, liver, spleen, kidney, urinary bladder and skeletal muscle. Expressed at low levels in testis, and more highly in brain regions. Expression is high the brain regions including cerebral cortical layers, with higher expression in VIb than in the II-V layers, pyramidal CA1-CA3 cell layers and granular cell layers of the hippocampus, granular cell layers of the dentate gyrus, including the caudate, putamen, nucleus accumbens and olfactory tubercle, the granular layer cell layers of the medial habenula, in the cerebellum, predominantly in Purkinje cells, and in the granule cell layer. Also expressed in areas of the brain including the medial geniculate nucleus, substantia nigra, pars compacta, the ventral tegmental area, and in several thalamic, amygdaloid and hypothalamic nuclei, such as the arcuate nucleus of the hypothalamus and mammilary bodies of the hypothalamus. Expressed in the amacrine cell of the retina. As to expression, expressed in the brain, spinal cord, stomach, testis, adrenal gland, pituitary, spleen and prostate. In terms of tissue distribution, expressed in the brain, spinal cord, stomach, testis, kidney and liver. Ubiquitously expressed. As to expression, expressed in the forebrain, cerebellum, eye, kidney and urinary bladder. In terms of tissue distribution, ubiquitously expressed with high expression in the pyramidal CA1-CA3 cell layers of the hippocampus, the granule cell layers of the dentate gyrus and olfactory tubercle, the whole cortex, and Purkinje cells of the cerebellum. Moderate expression in the granule cell layer of the cerebellum.

It is found in the cell membrane. Its subcellular location is the postsynaptic cell membrane. The protein resides in the cell projection. It localises to the dendrite. The protein localises to the perikaryon. Functionally, component of a heterodimeric G-protein coupled receptor for GABA, formed by GABBR1 and GABBR2. Within the heterodimeric GABA receptor, only GABBR1 seems to bind agonists, while GABBR2 mediates coupling to G proteins. Ligand binding causes a conformation change that triggers signaling via guanine nucleotide-binding proteins (G proteins) and modulates the activity of down-stream effectors, such as adenylate cyclase. Signaling inhibits adenylate cyclase, stimulates phospholipase A2, activates potassium channels, inactivates voltage-dependent calcium-channels and modulates inositol phospholipid hydrolysis. Calcium is required for high affinity binding to GABA. Plays a critical role in the fine-tuning of inhibitory synaptic transmission. Pre-synaptic GABA receptor inhibits neurotransmitter release by down-regulating high-voltage activated calcium channels, whereas postsynaptic GABA receptor decreases neuronal excitability by activating a prominent inwardly rectifying potassium (Kir) conductance that underlies the late inhibitory postsynaptic potentials. Not only implicated in synaptic inhibition but also in hippocampal long-term potentiation, slow wave sleep, muscle relaxation and antinociception. The polypeptide is Gamma-aminobutyric acid type B receptor subunit 1 (Gabbr1) (Rattus norvegicus (Rat)).